The primary structure comprises 313 residues: Protoheme IX farnesyltransferase (313 aa).

A run of 8 helical transmembrane segments spans residues 32–52 (VMSLVVFTALVGMLLAPGDFH), 53–73 (PVLAVTAMLCIAVGGGAAGAL), 120–140 (VLVNWIAAALLAFTIFFYVVI), 153–173 (IVIGGAAGALPPVVAWAAVTG), 180–200 (LLLFAIIFFWTPPHFWALALF), 226–246 (ILLYTIVLVAVAAAPWPLGYF), 248–268 (AVYGIASLALGGWMLVLAIRV), and 284–304 (LFKFSILYLFALFSILLIEVV).

It belongs to the UbiA prenyltransferase family. Protoheme IX farnesyltransferase subfamily.

The protein resides in the cell inner membrane. The catalysed reaction is heme b + (2E,6E)-farnesyl diphosphate + H2O = Fe(II)-heme o + diphosphate. The protein operates within porphyrin-containing compound metabolism; heme O biosynthesis; heme O from protoheme: step 1/1. Its function is as follows. Converts heme B (protoheme IX) to heme O by substitution of the vinyl group on carbon 2 of heme B porphyrin ring with a hydroxyethyl farnesyl side group. The sequence is that of Protoheme IX farnesyltransferase from Rhodopseudomonas palustris (strain BisB5).